The chain runs to 4965 residues: Auxin transport protein BIG (4965 aa).

A run of 3 helical transmembrane segments spans residues 289 to 309 (SDICCTVQVCILASLLEIFSP), 646 to 666 (ACLAAYVVVSGNTSVMVAYEV), and 772 to 792 (LFLICWSTLSGIGYSGGYEGL). Positions 1383-1425 (TNQESNSTVDCDASSGEEDEDDGTSDGELVSIDRDEEEDGNSE) are disordered. Over residues 1397-1407 (SGEEDEDDGTS) the composition is skewed to acidic residues. The segment at 1431-1502 (KVCTFTSSGS…RGSSCQCLKP (72 aa)) adopts a UBR-type zinc-finger fold. Positions 2437–2456 (DDAPDNHAKASAASNSTTGN) are disordered. A compositionally biased stretch (low complexity) spans 2445 to 2456 (KASAASNSTTGN). The ZZ-type zinc-finger motif lies at 2469–2528 (SVQYCCDGCSTVPILRRRWHCNICPDFDLCETCYEILDADRLPAPHSRDHPMSAIPIELD). Cys2474, Cys2477, Cys2489, Cys2492, Cys2498, Cys2501, His2514, and His2518 together coordinate Zn(2+). Residues 2997 to 3037 (NAQKTESGDIGSSTRTGSQSSDSKKKRKGDDSSEGSSEKSC) are disordered. A compositionally biased stretch (low complexity) spans 3007–3017 (GSSTRTGSQSS). Residues 3024 to 3037 (KGDDSSEGSSEKSC) are compositionally biased toward basic and acidic residues. An MYND-type; degenerate zinc finger spans residues 3319–3359 (CPRCSRSVTDKHGICSNCHENAYQCRQCRNINYENLDSFLC). A disordered region spans residues 3672–3721 (PKSDSGEKEPGMGKSSLMQAKNDDTVGHSVTNLSTSKTQSELSGKIPDGS). A compositionally biased stretch (polar residues) spans 3699–3713 (HSVTNLSTSKTQSEL). Residues 4433–4963 (PSIPLILSML…DFVRAIIHGA (531 aa)) form a UBR4 E3 catalytic module region. The HemiRING-type zinc-finger motif lies at 4562 to 4681 (GLACMVCREG…WDQLNSLGRA (120 aa)). Cys4565, Cys4568, His4615, and Cys4618 together coordinate Zn(2+). The UZI domain maps to 4684–4963 (SRLRLLTYDI…DFVRAIIHGA (280 aa)). The span at 4753–4770 (SSSPSTPESPVRLSALSG) shows a compositional bias: low complexity. Disordered regions lie at residues 4753 to 4778 (SSSPSTPESPVRLSALSGARGGSGSS) and 4822 to 4846 (STLKLSADTSSSAVRSDEGSSADSN). Over residues 4824–4845 (LKLSADTSSSAVRSDEGSSADS) the composition is skewed to polar residues.

Belongs to the UBR4 family.

It is found in the membrane. Required for auxin efflux and polar auxin transport (PAT) influencing auxin-mediated developmental responses (e.g. cell elongation, apical dominance, lateral root production, inflorescence architecture, general growth and development). The chain is Auxin transport protein BIG from Oryza sativa subsp. japonica (Rice).